Consider the following 412-residue polypeptide: Argininosuccinate synthase (412 aa).

Residues 10 to 18 and Ala36 each bind ATP; that span reads AYSGGLDTS. L-citrulline is bound by residues Tyr87 and Ser92. Tyr87 carries the phosphotyrosine modification. Residue Lys112 is modified to N6-acetyllysine. Phosphotyrosine is present on Tyr113. 115–123 serves as a coordination point for ATP; it reads SHGATGKGN. Positions 119, 123, and 124 each coordinate L-aspartate. Residue Asn123 coordinates L-citrulline. Arg127 is a binding site for L-citrulline. Residues Lys165 and Lys176 each carry the N6-acetyllysine; by CLOCK modification. Residues Ser180 and Ser189 each contribute to the L-citrulline site. Phosphoserine is present on Ser180. The residue at position 219 (Thr219) is a Phosphothreonine. The L-citrulline site is built by Glu270 and Tyr282.

This sequence belongs to the argininosuccinate synthase family. Type 1 subfamily. As to quaternary structure, homotetramer. Interacts with NMRAL1. Interacts with CLOCK; in a circadian manner. Forms tissue-specific complexes with ASL, SLC7A1, HSP90AA1 and nitric oxide synthase NOS1, NOS2 or NOS3; the complex regulates cell-autonomous L-arginine synthesis and citrulline recycling while channeling extracellular L-arginine to nitric oxide synthesis pathway. In terms of processing, acetylated by CLOCK in a circadian manner which negatively regulates its enzyme activity. Deacetylated by histone deacetylases. In terms of tissue distribution, expressed in adult liver.

It is found in the cytoplasm. The protein localises to the cytosol. It catalyses the reaction L-citrulline + L-aspartate + ATP = 2-(N(omega)-L-arginino)succinate + AMP + diphosphate + H(+). It functions in the pathway amino-acid biosynthesis; L-arginine biosynthesis; L-arginine from L-ornithine and carbamoyl phosphate: step 2/3. It participates in nitrogen metabolism; urea cycle; (N(omega)-L-arginino)succinate from L-aspartate and L-citrulline: step 1/1. Its function is as follows. One of the enzymes of the urea cycle, the metabolic pathway transforming neurotoxic amonia produced by protein catabolism into inocuous urea in the liver of ureotelic animals. Catalyzes the formation of arginosuccinate from aspartate, citrulline and ATP and together with ASL it is responsible for the biosynthesis of arginine in most body tissues. The polypeptide is Argininosuccinate synthase (Homo sapiens (Human)).